The chain runs to 65 residues: DNA gyrase inhibitor YacG (65 aa).

Zn(2+) contacts are provided by Cys9, Cys12, Cys28, and Cys32. Positions 45–65 (KRIPSSGDLSESDDWSEEPKQ) are disordered. Over residues 54 to 65 (SESDDWSEEPKQ) the composition is skewed to acidic residues.

Belongs to the DNA gyrase inhibitor YacG family. Interacts with GyrB. Requires Zn(2+) as cofactor.

In terms of biological role, inhibits all the catalytic activities of DNA gyrase by preventing its interaction with DNA. Acts by binding directly to the C-terminal domain of GyrB, which probably disrupts DNA binding by the gyrase. The polypeptide is DNA gyrase inhibitor YacG (Shigella boydii serotype 18 (strain CDC 3083-94 / BS512)).